Here is a 285-residue protein sequence, read N- to C-terminus: Protease HtpX homolog (285 aa).

Transmembrane regions (helical) follow at residues 7 to 27 and 30 to 50; these read TAML…MIGG and GMTI…WFSD. A Zn(2+)-binding site is contributed by H131. E132 is a catalytic residue. Zn(2+) is bound at residue H135. 2 helical membrane passes run 146 to 166 and 177 to 197; these read ISAT…FFGG and IAGI…QMAI. Residue E202 coordinates Zn(2+).

It belongs to the peptidase M48B family. The cofactor is Zn(2+).

The protein resides in the cell inner membrane. In Burkholderia mallei (strain NCTC 10247), this protein is Protease HtpX homolog.